Here is a 492-residue protein sequence, read N- to C-terminus: Tumor necrosis factor receptor superfamily member 8 (492 aa).

Residues 1–18 form the signal peptide; sequence MSILLKAAGLLFLGMLQA. At 19–282 the chain is on the extracellular side; it reads FPKDRPLDTT…STGTPFLDPG (264 aa). 2 TNFR-Cys repeats span residues 57–104 and 105–141; these read PCPQ…PRIC and ECQP…NTIC. 4 cysteine pairs are disulfide-bonded: Cys58–Cys80, Cys83–Cys96, Cys86–Cys104, and Cys123–Cys141. Residues 141-178 form a disordered region; it reads CDLPSPGSGPNGSNPDDCKTLTSHTTPQAIPTLESPAN. Residues 144–155 show a composition bias toward low complexity; the sequence is PSPGSGPNGSNP. 3 N-linked (GlcNAc...) asparagine glycosylation sites follow: Asn151, Asn178, and Asn224. Residues 160 to 178 are compositionally biased toward polar residues; it reads TLTSHTTPQAIPTLESPAN. A helical transmembrane segment spans residues 283–303; sequence SMLFWVAMVVLLVGSASFLLC. Residues 304–492 lie on the Cytoplasmic side of the membrane; the sequence is YWKACRRRFQ…DHEPTTVSEK (189 aa). A phosphoserine mark is found at Ser334 and Ser348. 2 disordered regions span residues 336–366 and 432–492; these read PTEK…PPAV and PEGR…VSEK. Positions 339-360 are enriched in polar residues; the sequence is KLTQLQRSGSVTDSSAGHTLSP. 2 stretches are compositionally biased toward basic and acidic residues: residues 450–459 and 478–492; these read EVDHTPHYPE and EGGK…VSEK.

The protein belongs to the TNFR8 family. In terms of assembly, interacts with TRAF1, TRAF2, TRAF3 and TRAF5. Very low level of expression. Detected in spleen, thymus and lung. Highly expressed in HTLV-1 infected T-cell lines.

It is found in the cell membrane. In terms of biological role, receptor for TNFSF8/CD30L. May play a role in the regulation of cellular growth and transformation of activated lymphoblasts. Regulates gene expression through activation of NF-kappa-B. The protein is Tumor necrosis factor receptor superfamily member 8 of Rattus norvegicus (Rat).